The primary structure comprises 128 residues: AESSAMKFQRQHMDPEGSPSNSSNYCNVMMIRRNMTQGRCKPVNTFVHESLADVQAVCFQKNVLCKNGQTNCYQSYSRMRITDCRVTSSSKFPNCSYRMSQAQKSIIVACEGDPYVPVHFDASVEPST.

The interval 1–21 (AESSAMKFQRQHMDPEGSPSN) is disordered. Substrate-binding residues include Lys-7 and Arg-10. His-12 functions as the Proton acceptor in the catalytic mechanism. Residues Asn-21 and Asn-34 are each glycosylated (N-linked (GlcNAc...) asparagine). 4 cysteine pairs are disulfide-bonded: Cys-26–Cys-84, Cys-40–Cys-95, Cys-58–Cys-110, and Cys-65–Cys-72. Residues 41–45 (KPVNT), Lys-66, and Arg-85 contribute to the substrate site. The active-site Proton donor is His-119.

This sequence belongs to the pancreatic ribonuclease family. As to expression, pancreas.

It is found in the secreted. The catalysed reaction is an [RNA] containing cytidine + H2O = an [RNA]-3'-cytidine-3'-phosphate + a 5'-hydroxy-ribonucleotide-3'-[RNA].. It carries out the reaction an [RNA] containing uridine + H2O = an [RNA]-3'-uridine-3'-phosphate + a 5'-hydroxy-ribonucleotide-3'-[RNA].. In Cavia porcellus (Guinea pig), this protein is Ribonuclease pancreatic B.